Consider the following 304-residue polypeptide: UDP-3-O-acyl-N-acetylglucosamine deacetylase (304 aa).

Zn(2+) contacts are provided by histidine 79, histidine 238, and aspartate 242. Residue histidine 265 is the Proton donor of the active site.

The protein belongs to the LpxC family. Zn(2+) serves as cofactor.

The enzyme catalyses a UDP-3-O-[(3R)-3-hydroxyacyl]-N-acetyl-alpha-D-glucosamine + H2O = a UDP-3-O-[(3R)-3-hydroxyacyl]-alpha-D-glucosamine + acetate. The protein operates within glycolipid biosynthesis; lipid IV(A) biosynthesis; lipid IV(A) from (3R)-3-hydroxytetradecanoyl-[acyl-carrier-protein] and UDP-N-acetyl-alpha-D-glucosamine: step 2/6. Functionally, catalyzes the hydrolysis of UDP-3-O-myristoyl-N-acetylglucosamine to form UDP-3-O-myristoylglucosamine and acetate, the committed step in lipid A biosynthesis. This Laribacter hongkongensis (strain HLHK9) protein is UDP-3-O-acyl-N-acetylglucosamine deacetylase.